The primary structure comprises 661 residues: Tegument protein UL46 homolog (661 aa).

Residues 1–31 (MFSRFARSFSSDDRTRKSYDGSYQSFNAGER) are disordered. A compositionally biased stretch (basic and acidic residues) spans 10 to 19 (SSDDRTRKSY). 2 helical membrane-spanning segments follow: residues 299 to 319 (AGTG…TALL) and 339 to 359 (AAIV…QYLI).

It belongs to the herpesviridae HHV-1 VP11/12 protein family. Post-translationally, phosphorylated by host LCK. The phosphorylation seems to be lymphocyte-specific.

The protein resides in the virion tegument. The protein localises to the host cytoplasm. Its subcellular location is the host membrane. Plays a role in the activation of the host PI3K/AKT pathway to promote cell survival. Interacts with and activates PI3KR1 in order to phosphorylate host AKT on its activating residues. Activates the host AP-1 pathway by triggering phosphorylation of host ERK1/2. Participates in host BIM and BAD phosphorylation, leading to apoptosis inhibition. The polypeptide is Tegument protein UL46 homolog (Varicella-zoster virus (strain Oka vaccine) (HHV-3)).